Reading from the N-terminus, the 417-residue chain is Valine--pyruvate aminotransferase (417 aa).

An N6-(pyridoxal phosphate)lysine modification is found at lysine 249.

The protein belongs to the class-I pyridoxal-phosphate-dependent aminotransferase family. As to quaternary structure, homodimer. Pyridoxal 5'-phosphate is required as a cofactor.

It localises to the cytoplasm. It carries out the reaction L-valine + pyruvate = 3-methyl-2-oxobutanoate + L-alanine. Involved in the biosynthesis of alanine. The protein is Valine--pyruvate aminotransferase (avtA) of Escherichia coli (strain K12).